A 288-amino-acid polypeptide reads, in one-letter code: Executioner caspase (288 aa).

The active site involves C131.

It belongs to the peptidase C14A family.

In terms of biological role, may induce host cell apoptosis and contribute of the establishment of a special cell cleavage process in which apoppotic bodies are rescued by the virus and differentiate to form large vesicles in which virion assembles. In Spodoptera frugiperda ascovirus 1a (SfAV-1a), this protein is Executioner caspase.